Reading from the N-terminus, the 313-residue chain is Ribosomal RNA small subunit methyltransferase H (313 aa).

S-adenosyl-L-methionine is bound by residues 35–37, Asp55, Phe79, Asp101, and Gln108; that span reads GGH.

Belongs to the methyltransferase superfamily. RsmH family.

The protein resides in the cytoplasm. The enzyme catalyses cytidine(1402) in 16S rRNA + S-adenosyl-L-methionine = N(4)-methylcytidine(1402) in 16S rRNA + S-adenosyl-L-homocysteine + H(+). Specifically methylates the N4 position of cytidine in position 1402 (C1402) of 16S rRNA. This is Ribosomal RNA small subunit methyltransferase H from Klebsiella pneumoniae (strain 342).